The sequence spans 372 residues: Solute carrier family 35 member F6 (372 aa).

An N-terminal signal peptide occupies residues 1–18 (MAWTKYQLFLAGLMLVTG). Transmembrane regions (helical) follow at residues 48-68 (FVQAVGMFLGEFSCLAAFYLL) and 89-109 (LLFLPPALCDMTGTSIMYVAL). The region spanning 105 to 160 (MYVALNMTSASSFQMLRGAVIIFTGLFSVAFLDRRLVPSQWLGILITIAGLVVVGL) is the EamA domain. Asn110 is a glycosylation site (N-linked (GlcNAc...) asparagine). 7 helical membrane-spanning segments follow: residues 116–136 (SFQMLRGAVIIFTGLFSVAFL), 145–165 (WLGILITIAGLVVVGLADLLS), 176–196 (VITGDLLIIMAQIIIAIQMVL), 211–231 (AVGIEGFFGFVILSLLLVPMY), 261–281 (LIALALLGNISSIAFFNFSGI), 293–312 (MVLDTLRTVVIWAFTLALGW), and 320–336 (ILGFLILLMGTALYNGL). Phosphothreonine is present on Thr366.

Belongs to the SLC35F solute transporter family. In terms of assembly, interacts with SLC25A5.

The protein resides in the mitochondrion. The protein localises to the lysosome membrane. Its function is as follows. Involved in the maintenance of mitochondrial membrane potential in pancreatic ductal adenocarcinoma (PDAC) cells. Promotes pancreatic ductal adenocarcinoma (PDAC) cell growth. May play a role as a nucleotide-sugar transporter. The protein is Solute carrier family 35 member F6 (Slc35f6) of Rattus norvegicus (Rat).